Consider the following 329-residue polypeptide: Biotin synthase (329 aa).

The 230-residue stretch at 46–275 (FFGRRLKLVR…LNPKAELRAS (230 aa)) folds into the Radical SAM core domain. Positions 64, 68, and 71 each coordinate [4Fe-4S] cluster. [2Fe-2S] cluster is bound by residues Cys-108, Cys-140, Cys-200, and Arg-273.

The protein belongs to the radical SAM superfamily. Biotin synthase family. As to quaternary structure, homodimer. It depends on [4Fe-4S] cluster as a cofactor. [2Fe-2S] cluster is required as a cofactor.

The enzyme catalyses (4R,5S)-dethiobiotin + (sulfur carrier)-SH + 2 reduced [2Fe-2S]-[ferredoxin] + 2 S-adenosyl-L-methionine = (sulfur carrier)-H + biotin + 2 5'-deoxyadenosine + 2 L-methionine + 2 oxidized [2Fe-2S]-[ferredoxin]. It participates in cofactor biosynthesis; biotin biosynthesis; biotin from 7,8-diaminononanoate: step 2/2. Its function is as follows. Catalyzes the conversion of dethiobiotin (DTB) to biotin by the insertion of a sulfur atom into dethiobiotin via a radical-based mechanism. The chain is Biotin synthase from Thermus thermophilus (strain ATCC 27634 / DSM 579 / HB8).